The following is a 591-amino-acid chain: Aspartate--tRNA(Asp/Asn) ligase (591 aa).

Residue Glu174 participates in L-aspartate binding. An aspartate region spans residues 198–201; the sequence is QLFK. Residue Arg220 coordinates L-aspartate. ATP is bound by residues 220–222 and Gln229; that span reads RDE. Residue His450 participates in L-aspartate binding. ATP is bound at residue Glu483. Residue Arg490 coordinates L-aspartate. 535 to 538 contributes to the ATP binding site; sequence GLDR.

It belongs to the class-II aminoacyl-tRNA synthetase family. Type 1 subfamily. Homodimer.

It localises to the cytoplasm. It catalyses the reaction tRNA(Asx) + L-aspartate + ATP = L-aspartyl-tRNA(Asx) + AMP + diphosphate. Its function is as follows. Aspartyl-tRNA synthetase with relaxed tRNA specificity since it is able to aspartylate not only its cognate tRNA(Asp) but also tRNA(Asn). Reaction proceeds in two steps: L-aspartate is first activated by ATP to form Asp-AMP and then transferred to the acceptor end of tRNA(Asp/Asn). The chain is Aspartate--tRNA(Asp/Asn) ligase from Pseudomonas putida (strain W619).